The primary structure comprises 385 residues: Polyketide synthase 2 (385 aa).

Cys157 is a catalytic residue.

Belongs to the thiolase-like superfamily. Chalcone/stilbene synthases family. As to expression, expressed in leaves and glandular trichomes.

It localises to the cytoplasm. Polyketide synthase responsible for the biosynthesis of secondary metabolites. This chain is Polyketide synthase 2 (PKSG2), found in Cannabis sativa (Hemp).